The following is a 172-amino-acid chain: Translation initiation factor IF-3 (172 aa).

Belongs to the IF-3 family. Monomer.

The protein resides in the cytoplasm. Functionally, IF-3 binds to the 30S ribosomal subunit and shifts the equilibrium between 70S ribosomes and their 50S and 30S subunits in favor of the free subunits, thus enhancing the availability of 30S subunits on which protein synthesis initiation begins. The polypeptide is Translation initiation factor IF-3 (Geobacillus stearothermophilus (Bacillus stearothermophilus)).